A 150-amino-acid chain; its full sequence is 3-hydroxyacyl-[acyl-carrier-protein] dehydratase FabZ (150 aa).

Residue His54 is part of the active site.

Belongs to the thioester dehydratase family. FabZ subfamily.

Its subcellular location is the cytoplasm. The catalysed reaction is a (3R)-hydroxyacyl-[ACP] = a (2E)-enoyl-[ACP] + H2O. Functionally, involved in unsaturated fatty acids biosynthesis. Catalyzes the dehydration of short chain beta-hydroxyacyl-ACPs and long chain saturated and unsaturated beta-hydroxyacyl-ACPs. The chain is 3-hydroxyacyl-[acyl-carrier-protein] dehydratase FabZ from Pseudoalteromonas translucida (strain TAC 125).